The sequence spans 540 residues: Zona pellucida sperm-binding protein 4 (540 aa).

An N-terminal signal peptide occupies residues 1 to 18; that stretch reads MWLLRCVLLCVSLSLAVS. The Extracellular segment spans residues 19 to 505; it reads GQHKPEAPDY…EKLRVPVDSK (487 aa). Asn69 carries an N-linked (GlcNAc...) asparagine glycan. The P-type domain occupies 141–183; it reads DWCDSIPARDRLPCAPSPISRGDCEGLGCCYSSEEVNSCYYGN. A ZP domain is found at 188 to 466; it reads HCTREGHFSI…VTCPDLSRRR (279 aa). N-linked (GlcNAc...) asparagine glycosylation is found at Asn202, Asn219, and Asn267. An O-linked (GalNAc...) threonine glycan is attached at Thr302. Cysteines 367 and 442 form a disulfide. A propeptide spans 463–540 (removed in mature form); the sequence is SRRRNFDNSS…QKSCPDQMCQ (78 aa). N-linked (GlcNAc...) asparagine glycosylation is found at Asn470 and Asn474. A helical transmembrane segment spans residues 506–526; sequence VLWVAGLSGTLILGALLVSYL. Residues 527-540 lie on the Cytoplasmic side of the membrane; the sequence is AVKKQKSCPDQMCQ.

It belongs to the ZP domain family. ZPB subfamily. Post-translationally, proteolytically cleaved before the transmembrane segment to yield the secreted ectodomain incorporated in the zona pellucida. Expressed in oocytes.

The protein localises to the zona pellucida. The protein resides in the cell membrane. Functionally, component of the zona pellucida, an extracellular matrix surrounding oocytes which mediates sperm binding, induction of the acrosome reaction and prevents post-fertilization polyspermy. The zona pellucida is composed of 3 to 4 glycoproteins, ZP1, ZP2, ZP3, and ZP4. ZP4 may act as a sperm receptor. The sequence is that of Zona pellucida sperm-binding protein 4 (ZP4) from Homo sapiens (Human).